Here is a 155-residue protein sequence, read N- to C-terminus: MPGVTVKEIDQHVLTKNMAAFLKKSGKIFVPEQAVYMKTGKFKETAPTDDDWFYTRCASIMRHLYLRSPAGVGAFTKVYSGRKRNGVRPSKHCRSSDGCIRKALQALEAANMVERHPDGGRKLTPQGQRNLDRIANKIVAKQRERSAPVSMIITT.

This sequence belongs to the eukaryotic ribosomal protein eS19 family.

The polypeptide is Small ribosomal subunit protein eS19B (RpS19b) (Drosophila melanogaster (Fruit fly)).